A 466-amino-acid polypeptide reads, in one-letter code: Asparagine--tRNA ligase (466 aa).

It belongs to the class-II aminoacyl-tRNA synthetase family. In terms of assembly, homodimer.

It is found in the cytoplasm. It carries out the reaction tRNA(Asn) + L-asparagine + ATP = L-asparaginyl-tRNA(Asn) + AMP + diphosphate + H(+). This is Asparagine--tRNA ligase from Photobacterium profundum (strain SS9).